Here is a 1068-residue protein sequence, read N- to C-terminus: Huntingtin-interacting protein 1-related protein (1068 aa).

Met1 is subject to N-acetylmethionine. The region spanning 23–151 is the ENTH domain; sequence EREQFDKTQA…SFHLKHPQFP (129 aa). A coiled-coil region spans residues 347-599; sequence SVKDDRDLQI…RSSQEQGELQ (253 aa). 3 disordered regions span residues 424 to 443, 529 to 549, and 582 to 608; these read LEGE…ASAT, ARAQ…SSRL, and AALS…RESQ. Composition is skewed to basic and acidic residues over residues 425–443 and 539–549; these read EGER…ASAT and EQSKSELSSRL. Positions 590–600 are enriched in low complexity; that stretch reads RSSQEQGELQG. The I/LWEQ domain occupies 771 to 1012; it reads SLDVRQEELG…ELRKQHYVLA (242 aa). Positions 867-924 are important for actin binding; it reads RWTEGLISASKAVGWGATQLVEAADKVVLHTGKYEELIVCSHEIAASTAQLVAASKVK. The disordered stretch occupies residues 1016–1060; sequence GSPGEEVAIRPSTAPRSVTTKKPPLAQKPSVAPRQDHQLDKKDGI. Ser1017 is modified (phosphoserine). The segment covering 1049–1059 has biased composition (basic and acidic residues); the sequence is RQDHQLDKKDG.

Belongs to the SLA2 family. As to quaternary structure, homodimer. Interacts with actin; homodimerization promotes actin binding. Interacts with CLTB. Interacts with HIP1. Interacts (via ENTH and I/LWEQ domains) with BCL2L10. As to expression, brain, heart, kidney, pancreas, and liver, but not in lung or placenta.

The protein resides in the cytoplasm. Its subcellular location is the perinuclear region. It is found in the endomembrane system. It localises to the cytoplasmic vesicle. The protein localises to the clathrin-coated vesicle membrane. Functionally, component of clathrin-coated pits and vesicles, that may link the endocytic machinery to the actin cytoskeleton. Binds 3-phosphoinositides (via ENTH domain). May act through the ENTH domain to promote cell survival by stabilizing receptor tyrosine kinases following ligand-induced endocytosis. This Homo sapiens (Human) protein is Huntingtin-interacting protein 1-related protein (HIP1R).